Reading from the N-terminus, the 349-residue chain is uncharacterized protein (349 aa).

Residues 221 to 241 (AFVVWIGSGLNIIWWTGIVLL) traverse the membrane as a helical segment. Positions 328–339 (VASAPPAVPSQP) are enriched in pro residues. The segment at 328–349 (VASAPPAVPSQPPEYSSVFPPV) is disordered.

Its subcellular location is the host membrane. This is an uncharacterized protein from Human cytomegalovirus (strain Merlin) (HHV-5).